Here is a 225-residue protein sequence, read N- to C-terminus: MRIDIITVLPEMIENTLNCSIIGRAQERGLLELKLHQLRDYSTDKWKRVDDYPFGGEPGMVMQVEPIDRIITELKTQREYDEVIFTSPDGERFDQPMANELSLLSNLIILCGHYKGIDYRIREHLITREISIGDYVLTGGELAAAVMTDAIARLIPGVLNDAGSALSDTFQDNLLAPPVYTRPAEYKGWRVPDILLSGHEANIAKWRLEQAVERTKRLRPDLIKD.

Residues Gly112 and 132-137 each bind S-adenosyl-L-methionine; that span reads IGDYVL.

The protein belongs to the RNA methyltransferase TrmD family. As to quaternary structure, homodimer.

The protein resides in the cytoplasm. It catalyses the reaction guanosine(37) in tRNA + S-adenosyl-L-methionine = N(1)-methylguanosine(37) in tRNA + S-adenosyl-L-homocysteine + H(+). In terms of biological role, specifically methylates guanosine-37 in various tRNAs. The polypeptide is tRNA (guanine-N(1)-)-methyltransferase (Porphyromonas gingivalis (strain ATCC 33277 / DSM 20709 / CIP 103683 / JCM 12257 / NCTC 11834 / 2561)).